A 110-amino-acid polypeptide reads, in one-letter code: Iron-sulfur cluster assembly protein CyaY (110 aa).

The protein belongs to the frataxin family.

In terms of biological role, involved in iron-sulfur (Fe-S) cluster assembly. May act as a regulator of Fe-S biogenesis. This chain is Iron-sulfur cluster assembly protein CyaY, found in Pseudomonas putida (strain ATCC 700007 / DSM 6899 / JCM 31910 / BCRC 17059 / LMG 24140 / F1).